A 319-amino-acid chain; its full sequence is D-alanine--D-alanine ligase (319 aa).

The tract at residues 1–23 (MTGPEWAHTRGTKVGQSSRTPPK) is disordered. The ATP-grasp domain maps to 120–313 (KDAFVAAGLP…FGKLCAWMVE (194 aa)). Residue 147–197 (MQPPYVVKPNNEGSSVGVYLVHEAANGPPQLSEDMPQEVMVEAFAPGRELT) coordinates ATP. Mg(2+) is bound by residues Asp-264, Glu-280, and Asn-282.

The protein belongs to the D-alanine--D-alanine ligase family. The cofactor is Mg(2+). Requires Mn(2+) as cofactor.

The protein localises to the cytoplasm. It carries out the reaction 2 D-alanine + ATP = D-alanyl-D-alanine + ADP + phosphate + H(+). It functions in the pathway cell wall biogenesis; peptidoglycan biosynthesis. Cell wall formation. The chain is D-alanine--D-alanine ligase from Roseobacter denitrificans (strain ATCC 33942 / OCh 114) (Erythrobacter sp. (strain OCh 114)).